Here is a 984-residue protein sequence, read N- to C-terminus: Valine--tRNA ligase (984 aa).

The 'HIGH' region signature appears at Pro-65–His-75. The 'KMSKS' region motif lies at Lys-579–Ser-583. Position 582 (Lys-582) interacts with ATP. Residues Val-954–Leu-984 are a coiled coil.

The protein belongs to the class-I aminoacyl-tRNA synthetase family. ValS type 1 subfamily. As to quaternary structure, monomer.

It localises to the cytoplasm. It catalyses the reaction tRNA(Val) + L-valine + ATP = L-valyl-tRNA(Val) + AMP + diphosphate. In terms of biological role, catalyzes the attachment of valine to tRNA(Val). As ValRS can inadvertently accommodate and process structurally similar amino acids such as threonine, to avoid such errors, it has a 'posttransfer' editing activity that hydrolyzes mischarged Thr-tRNA(Val) in a tRNA-dependent manner. This chain is Valine--tRNA ligase, found in Psychrobacter arcticus (strain DSM 17307 / VKM B-2377 / 273-4).